A 133-amino-acid polypeptide reads, in one-letter code: Small ribosomal subunit protein uS8 (133 aa).

This sequence belongs to the universal ribosomal protein uS8 family. In terms of assembly, part of the 30S ribosomal subunit. Contacts proteins S5 and S12.

In terms of biological role, one of the primary rRNA binding proteins, it binds directly to 16S rRNA central domain where it helps coordinate assembly of the platform of the 30S subunit. In Salinibacter ruber (strain DSM 13855 / M31), this protein is Small ribosomal subunit protein uS8.